Here is a 168-residue protein sequence, read N- to C-terminus: Large ribosomal subunit protein uL10 (168 aa).

This sequence belongs to the universal ribosomal protein uL10 family. Part of the ribosomal stalk of the 50S ribosomal subunit. The N-terminus interacts with L11 and the large rRNA to form the base of the stalk. The C-terminus forms an elongated spine to which L12 dimers bind in a sequential fashion forming a multimeric L10(L12)X complex.

Forms part of the ribosomal stalk, playing a central role in the interaction of the ribosome with GTP-bound translation factors. The sequence is that of Large ribosomal subunit protein uL10 from Clostridioides difficile (strain 630) (Peptoclostridium difficile).